Consider the following 166-residue polypeptide: uncharacterized protein (166 aa).

The HTH asnC-type domain maps to 3–65 (LTEKETEILE…IDWRKVDGHE (63 aa)). The segment at residues 22–41 (LETIAKMAGIPVNEVKTIID) is a DNA-binding region (H-T-H motif).

This is an uncharacterized protein from Bacillus subtilis (strain 168).